The chain runs to 463 residues: MNVNIKTREYTTVTEVSGPLMIVEGVEGVAYSEIVEIETPTGEKRRGQVLEVREDLAVVQVFEGTSDLNTETTKIRFTGETAKIGVSLDMMGRIFDGTGKPIDGGPEIIPEKELDINGSPMNPAAREFPAEFIQTGISTIDGMNTLVRGQKLPIFSGSGLPHNELAAQIARQAKVLAEESEFAVIFAAMGITHEEANYFMRDFERTGALERVTVFMNLADDPAIERIITPRMALTTAEYFAFEHDMHVLVILTDLTNYCEALREISAAREEVPGRRGYPGYMYTDLASLYERAGRIVGKEGSITQMPILVMPQDDITHPIPDLTGYITEGQIVLSRDLHRKGIYPPVDVLPSLSRLMSGGIGEGRTREDHSGVSDQLYSAYAEGRDLRDLMAVVGEEALTERDRKFLKFADEFEKRFITQARDEDRSIEETLNLGWELLSLLPRSELKRVREEHIPKYLPGAE.

This sequence belongs to the ATPase alpha/beta chains family. As to quaternary structure, has multiple subunits with at least A(3), B(3), C, D, E, F, H, I and proteolipid K(x).

The protein resides in the cell membrane. Its function is as follows. Component of the A-type ATP synthase that produces ATP from ADP in the presence of a proton gradient across the membrane. The B chain is a regulatory subunit. This Methanothermobacter thermautotrophicus (strain ATCC 29096 / DSM 1053 / JCM 10044 / NBRC 100330 / Delta H) (Methanobacterium thermoautotrophicum) protein is A-type ATP synthase subunit B.